Consider the following 178-residue polypeptide: uncharacterized protein (178 aa).

This sequence belongs to the tail fiber family.

This is an uncharacterized protein from Escherichia coli (strain K12).